A 140-amino-acid chain; its full sequence is MPTINQLVRKGRQKKVFKSKSPALNKGYNSFKKEQTNVSSPQKRGVCTRVGTMTPKKPNSALRKYARVRLTNGIEVTAYIPGIGHNLQEHSVVLIRGGRVKDLPGVRYHIVRGALDTAGVANRMQGRSKYGAKKPKAAKK.

A disordered region spans residues 33-55 (KEQTNVSSPQKRGVCTRVGTMTP). At Asp102 the chain carries 3-methylthioaspartic acid.

This sequence belongs to the universal ribosomal protein uS12 family. As to quaternary structure, part of the 30S ribosomal subunit. Contacts proteins S8 and S17. May interact with IF1 in the 30S initiation complex.

Its function is as follows. With S4 and S5 plays an important role in translational accuracy. Functionally, interacts with and stabilizes bases of the 16S rRNA that are involved in tRNA selection in the A site and with the mRNA backbone. Located at the interface of the 30S and 50S subunits, it traverses the body of the 30S subunit contacting proteins on the other side and probably holding the rRNA structure together. The combined cluster of proteins S8, S12 and S17 appears to hold together the shoulder and platform of the 30S subunit. This chain is Small ribosomal subunit protein uS12, found in Geobacillus thermodenitrificans (strain NG80-2).